The chain runs to 161 residues: ATP synthase subunit b 1 (161 aa).

Residues 6 to 26 (EFYVALGFVIFVAILLYYGVH) form a helical membrane-spanning segment.

Belongs to the ATPase B chain family. In terms of assembly, F-type ATPases have 2 components, F(1) - the catalytic core - and F(0) - the membrane proton channel. F(1) has five subunits: alpha(3), beta(3), gamma(1), delta(1), epsilon(1). F(0) has three main subunits: a(1), b(2) and c(10-14). The alpha and beta chains form an alternating ring which encloses part of the gamma chain. F(1) is attached to F(0) by a central stalk formed by the gamma and epsilon chains, while a peripheral stalk is formed by the delta and b chains.

It is found in the cell inner membrane. Its function is as follows. F(1)F(0) ATP synthase produces ATP from ADP in the presence of a proton or sodium gradient. F-type ATPases consist of two structural domains, F(1) containing the extramembraneous catalytic core and F(0) containing the membrane proton channel, linked together by a central stalk and a peripheral stalk. During catalysis, ATP synthesis in the catalytic domain of F(1) is coupled via a rotary mechanism of the central stalk subunits to proton translocation. Component of the F(0) channel, it forms part of the peripheral stalk, linking F(1) to F(0). In Beijerinckia indica subsp. indica (strain ATCC 9039 / DSM 1715 / NCIMB 8712), this protein is ATP synthase subunit b 1.